A 402-amino-acid chain; its full sequence is S-adenosylmethionine synthase (402 aa).

Residue histidine 16 participates in ATP binding. Residue aspartate 18 participates in Mg(2+) binding. Glutamate 44 is a K(+) binding site. Residues glutamate 57 and glutamine 103 each contribute to the L-methionine site. Residues 103–113 (QSPDIAQGVDT) are flexible loop. Residues 178 to 180 (DGK), 249 to 250 (KF), aspartate 258, 264 to 265 (RK), alanine 281, and lysine 285 each bind ATP. Aspartate 258 lines the L-methionine pocket. Lysine 289 lines the L-methionine pocket.

Belongs to the AdoMet synthase family. As to quaternary structure, homotetramer; dimer of dimers. Mg(2+) is required as a cofactor. Requires K(+) as cofactor.

The protein resides in the cytoplasm. The enzyme catalyses L-methionine + ATP + H2O = S-adenosyl-L-methionine + phosphate + diphosphate. It participates in amino-acid biosynthesis; S-adenosyl-L-methionine biosynthesis; S-adenosyl-L-methionine from L-methionine: step 1/1. Functionally, catalyzes the formation of S-adenosylmethionine (AdoMet) from methionine and ATP. The overall synthetic reaction is composed of two sequential steps, AdoMet formation and the subsequent tripolyphosphate hydrolysis which occurs prior to release of AdoMet from the enzyme. The chain is S-adenosylmethionine synthase from Mycobacterium sp. (strain JLS).